We begin with the raw amino-acid sequence, 1060 residues long: DNA topoisomerase 1 (1060 aa).

Positions 1–141 constitute a Toprim domain; that stretch reads MILVIAEKPN…KRMKFSALTK (141 aa). 2 residues coordinate Mg(2+): E7 and D107. Positions 156 to 947 constitute a Topo IA-type catalytic domain; it reads NFGMANAGIA…EAKIRLTKIL (792 aa). Residues 196–201 form an interaction with DNA region; it reads STGRVQ. One can recognise a DOD-type homing endonuclease domain in the interval 482-591; the sequence is LIGYLAGKGG…IKVYLQLLGI (110 aa). Residue Y690 is the O-(5'-phospho-DNA)-tyrosine intermediate of the active site. The C4-type 1 zinc finger occupies 978 to 1006; the sequence is CPKCGGDLIVKYNEKTGKRFVGCSNWPKC. The C4-type 2; atypical zinc finger occupies 1025–1050; the sequence is CCNGAPVVIIREKDGREWEICLDMNC.

Belongs to the type IA topoisomerase family. As to quaternary structure, monomer. Requires Mg(2+) as cofactor. Post-translationally, this protein undergoes a protein self splicing that involves a post-translational excision of the intervening region (intein) followed by peptide ligation.

It carries out the reaction ATP-independent breakage of single-stranded DNA, followed by passage and rejoining.. Its function is as follows. Releases the supercoiling and torsional tension of DNA, which is introduced during the DNA replication and transcription, by transiently cleaving and rejoining one strand of the DNA duplex. Introduces a single-strand break via transesterification at a target site in duplex DNA. The scissile phosphodiester is attacked by the catalytic tyrosine of the enzyme, resulting in the formation of a DNA-(5'-phosphotyrosyl)-enzyme intermediate and the expulsion of a 3'-OH DNA strand. The free DNA strand then undergoes passage around the unbroken strand, thus removing DNA supercoils. Finally, in the religation step, the DNA 3'-OH attacks the covalent intermediate to expel the active-site tyrosine and restore the DNA phosphodiester backbone. The polypeptide is DNA topoisomerase 1 (topA) (Pyrococcus furiosus (strain ATCC 43587 / DSM 3638 / JCM 8422 / Vc1)).